The following is a 448-amino-acid chain: MAGAGPAPGLPGAGGPVVPGPGAGIPGKSGEERLKEMEAEMALFEQEVLGAPVTGIPTAVPAVPTVPTVEAMQVPAAPVIRPIIATNTYQQVQQTLEARAAAAATVVPPMVGGPPFVGPVGFGPGDRSHLDSPEAREAMFLRRAAAGPRPMALRPPHQALVGPPLPGPPGPPMMLPPMARAPGPPLGSMAALRPPLEEPATPRELGLGLGLGLKEKEEAVVAAAAGLEEASAVVAVGAGGAPAGPAVIGPSLPLALAMPLPEPEPLPLPLEVVRGLLPPLRIPELLSLRPRPRPPRPEPPPGLMALEVPEPLSEDKKKGKPEKLKRCIRTAAGSSWEDPSLLEWDADDFRIFCGDLGNEVNDDILARAFSRFPSFLKAKVIRDKRTGKTKGYGFVSFKDPSDYVRAMREMNGKYVGSRPIKLRKSMWKDRNLDVVRKKQKEKKKLGLR.

The disordered stretch occupies residues 1 to 29 (MAGAGPAPGLPGAGGPVVPGPGAGIPGKS). N-acetylalanine is present on Ala-2. Positions 11-27 (PGAGGPVVPGPGAGIPG) are enriched in gly residues. Residue Ser-132 is modified to Phosphoserine. Asymmetric dimethylarginine is present on Arg-149. Residues 204–448 (ELGLGLGLGL…QKEKKKLGLR (245 aa)) form a necessary for interaction with HNRNPK region. Residues 286-324 (LSLRPRPRPPRPEPPPGLMALEVPEPLSEDKKKGKPEKL) form a disordered region. Basic and acidic residues predominate over residues 313 to 324 (SEDKKKGKPEKL). The 79-residue stretch at 349–427 (FRIFCGDLGN…RPIKLRKSMW (79 aa)) folds into the RRM domain.

This sequence belongs to the RRM RBM42 family. As to quaternary structure, interacts with HNRNPK.

The protein localises to the nucleus. It is found in the cytoplasm. In terms of biological role, binds (via the RRM domain) to the 3'-untranslated region (UTR) of CDKN1A mRNA. This Bos taurus (Bovine) protein is RNA-binding protein 42 (RBM42).